Consider the following 662-residue polypeptide: DNA ligase (662 aa).

NAD(+) is bound by residues 31–35, 80–81, and glutamate 109; these read DYEYD and SL. The active-site N6-AMP-lysine intermediate is lysine 111. Residues arginine 132, glutamate 166, lysine 282, and lysine 306 each contribute to the NAD(+) site. The Zn(2+) site is built by cysteine 400, cysteine 403, cysteine 418, and cysteine 423. Positions 581-662 constitute a BRCT domain; it reads KVSNIFEGKT…FEEMLKGENI (82 aa).

The protein belongs to the NAD-dependent DNA ligase family. LigA subfamily. It depends on Mg(2+) as a cofactor. Requires Mn(2+) as cofactor.

The enzyme catalyses NAD(+) + (deoxyribonucleotide)n-3'-hydroxyl + 5'-phospho-(deoxyribonucleotide)m = (deoxyribonucleotide)n+m + AMP + beta-nicotinamide D-nucleotide.. Its function is as follows. DNA ligase that catalyzes the formation of phosphodiester linkages between 5'-phosphoryl and 3'-hydroxyl groups in double-stranded DNA using NAD as a coenzyme and as the energy source for the reaction. It is essential for DNA replication and repair of damaged DNA. This Thermoanaerobacter sp. (strain X514) protein is DNA ligase.